A 432-amino-acid polypeptide reads, in one-letter code: Adenylosuccinate synthetase (432 aa).

GTP-binding positions include 13–19 (GDEGKGK) and 41–43 (GHT). The active-site Proton acceptor is Asp-14. Positions 14 and 41 each coordinate Mg(2+). IMP-binding positions include 14–17 (DEGK), 39–42 (NAGH), Thr-130, Arg-144, Gln-225, Thr-240, and Arg-304. His-42 serves as the catalytic Proton donor. 300–306 (STTGRPR) contacts substrate. GTP is bound by residues Arg-306, 332-334 (KLD), and 416-418 (STG).

Belongs to the adenylosuccinate synthetase family. As to quaternary structure, homodimer. Mg(2+) serves as cofactor.

The protein resides in the cytoplasm. The catalysed reaction is IMP + L-aspartate + GTP = N(6)-(1,2-dicarboxyethyl)-AMP + GDP + phosphate + 2 H(+). It functions in the pathway purine metabolism; AMP biosynthesis via de novo pathway; AMP from IMP: step 1/2. Functionally, plays an important role in the de novo pathway of purine nucleotide biosynthesis. Catalyzes the first committed step in the biosynthesis of AMP from IMP. The protein is Adenylosuccinate synthetase of Nitrosomonas eutropha (strain DSM 101675 / C91 / Nm57).